The chain runs to 188 residues: MSIKSDKWIRRMAQEHGMIEPFVERQVRGSDDSRVISYGVSSYGYDVRCTNHFKVFTNINSAIVDPKNFDAGSFVDVHSDVCIIPPNSFALATTVEYFRIPRNVLTICLGKSTYARCGIIVNVTPLEPEWEGQVTLEFSNTTNLPAKIYANEGVAQMLFLESDEECEVSYKDRAGKYQGQRGVTLPRT.

DCTP contacts are provided by residues 111–116, 135–137, Gln156, Tyr170, and Gln180; these read KSTYAR and TLE. Catalysis depends on Glu137, which acts as the Proton donor/acceptor.

This sequence belongs to the dCTP deaminase family. As to quaternary structure, homotrimer.

The enzyme catalyses dCTP + H2O + H(+) = dUTP + NH4(+). Its pathway is pyrimidine metabolism; dUMP biosynthesis; dUMP from dCTP (dUTP route): step 1/2. In terms of biological role, catalyzes the deamination of dCTP to dUTP. This is dCTP deaminase from Pseudomonas fluorescens (strain Pf0-1).